Here is a 243-residue protein sequence, read N- to C-terminus: LexA repressor (243 aa).

The interval 1–30 (MSDDTGEFTDGSTESPADADGAGRRRAVDN) is disordered. Over residues 21–30 (GAGRRRAVDN) the composition is skewed to basic and acidic residues. Residues 56–76 (IREIGDAVGLTSTSSVAHQLR) constitute a DNA-binding region (H-T-H motif). Catalysis depends on for autocatalytic cleavage activity residues S167 and K204.

This sequence belongs to the peptidase S24 family. In terms of assembly, homodimer.

The enzyme catalyses Hydrolysis of Ala-|-Gly bond in repressor LexA.. Represses a number of genes involved in the response to DNA damage (SOS response), including recA and lexA. In the presence of single-stranded DNA, RecA interacts with LexA causing an autocatalytic cleavage which disrupts the DNA-binding part of LexA, leading to derepression of the SOS regulon and eventually DNA repair. This chain is LexA repressor, found in Mycolicibacterium smegmatis (strain ATCC 700084 / mc(2)155) (Mycobacterium smegmatis).